A 433-amino-acid chain; its full sequence is Xylose isomerase (433 aa).

2 residues coordinate Mg(2+): D305 and D307.

Belongs to the xylose isomerase family. As to quaternary structure, homotetramer. The cofactor is Mg(2+).

It is found in the cytoplasm. It catalyses the reaction alpha-D-xylose = alpha-D-xylulofuranose. This Cereibacter sphaeroides (strain KD131 / KCTC 12085) (Rhodobacter sphaeroides) protein is Xylose isomerase.